A 1000-amino-acid chain; its full sequence is Putative methyl-accepting chemotaxis protein sll0041 (1000 aa).

Residues Met1 to Val59 form a disordered region. 2 GAF domains span residues Glu342 to Leu478 and Asn509 to Leu650. Residues Glu671–Thr722 form the HAMP domain. The region spanning Ala727–Ala963 is the Methyl-accepting transducer domain.

Belongs to the methyl-accepting chemotaxis (MCP) protein family.

The chain is Putative methyl-accepting chemotaxis protein sll0041 from Synechocystis sp. (strain ATCC 27184 / PCC 6803 / Kazusa).